The primary structure comprises 319 residues: Ribosomal RNA small subunit methyltransferase H (319 aa).

S-adenosyl-L-methionine contacts are provided by residues 35-37 (AGH), Asp-55, Phe-84, Asp-104, and Gln-111.

This sequence belongs to the methyltransferase superfamily. RsmH family.

The protein localises to the cytoplasm. It carries out the reaction cytidine(1402) in 16S rRNA + S-adenosyl-L-methionine = N(4)-methylcytidine(1402) in 16S rRNA + S-adenosyl-L-homocysteine + H(+). Specifically methylates the N4 position of cytidine in position 1402 (C1402) of 16S rRNA. This chain is Ribosomal RNA small subunit methyltransferase H, found in Enterococcus hirae.